A 160-amino-acid chain; its full sequence is Cytochrome b6-f complex subunit 4 (160 aa).

The next 3 helical transmembrane spans lie at 36–56 (LLYI…GLSV), 95–115 (LLGV…PFIE), and 131–151 (TLFL…TLPI).

The protein belongs to the cytochrome b family. PetD subfamily. In terms of assembly, the 4 large subunits of the cytochrome b6-f complex are cytochrome b6, subunit IV (17 kDa polypeptide, petD), cytochrome f and the Rieske protein, while the 4 small subunits are petG, petL, petM and petN. The complex functions as a dimer.

It is found in the plastid. The protein localises to the chloroplast thylakoid membrane. Component of the cytochrome b6-f complex, which mediates electron transfer between photosystem II (PSII) and photosystem I (PSI), cyclic electron flow around PSI, and state transitions. This Tetradesmus obliquus (Green alga) protein is Cytochrome b6-f complex subunit 4.